Here is a 1581-residue protein sequence, read N- to C-terminus: ATP-binding cassette sub-family C member 8 (1581 aa).

Residues Met-1–Ala-30 are Extracellular-facing. Cysteines 6 and 26 form a disulfide. An N-linked (GlcNAc...) asparagine glycan is attached at Asn-10. Residues Leu-31–Leu-47 traverse the membrane as a helical segment. The Cytoplasmic portion of the chain corresponds to Phe-48–Asn-72. The helical transmembrane segment at Leu-73 to Ile-89 threads the bilayer. Residues Ala-90–Leu-106 are Extracellular-facing. The helical transmembrane segment at Tyr-107 to Tyr-123 threads the bilayer. At Tyr-124 to Leu-136 the chain is on the cytoplasmic side. The helical transmembrane segment at Ile-137 to Lys-153 threads the bilayer. At Phe-154 to Phe-169 the chain is on the extracellular side. The helical transmembrane segment at Cys-170–Glu-186 threads the bilayer. Topologically, residues Val-187–Ser-303 are cytoplasmic. In terms of domain architecture, ABC transmembrane type-1 1 spans Leu-299–Lys-602. Residues Thr-304–Cys-319 form a helical membrane-spanning segment. Residues Ile-320–Tyr-356 are Extracellular-facing. Residues Val-357–Phe-372 traverse the membrane as a helical segment. The Cytoplasmic portion of the chain corresponds to Leu-373–Leu-438. The helical transmembrane segment at Trp-439–Tyr-454 threads the bilayer. At Ile-455–Ala-460 the chain is on the extracellular side. A helical transmembrane segment spans residues Leu-461–Val-473. The Cytoplasmic segment spans residues Gln-474–Ser-541. The helical transmembrane segment at Ile-542 to Ile-557 threads the bilayer. At Thr-558 to Ala-576 the chain is on the extracellular side. A helical transmembrane segment spans residues Phe-577–Leu-592. The Cytoplasmic portion of the chain corresponds to Leu-593–Leu-1012. The ABC transporter 1 domain maps to Val-679–Thr-929. ATP-binding residues include Trp-688, Gly-716, Ser-720, and Ser-721. Residue Ser-720 participates in Mg(2+) binding. Mg(2+) is bound at residue Gln-774. Residues Asp-935 to Thr-949 show a composition bias toward basic and acidic residues. The disordered stretch occupies residues Asp-935–Ser-987. A compositionally biased stretch (acidic residues) spans Leu-966–Asn-984. The 295-residue stretch at Leu-1012 to Leu-1306 folds into the ABC transmembrane type-1 2 domain. A helical membrane pass occupies residues Ser-1013–Asp-1030. At Tyr-1031–Val-1066 the chain is on the extracellular side. N-linked (GlcNAc...) asparagine glycosylation is present at Asn-1049. Residues Phe-1067–Val-1083 form a helical membrane-spanning segment. Residues Thr-1084–Leu-1142 are Cytoplasmic-facing. The chain crosses the membrane as a helical span at residues Ser-1143 to Thr-1160. Position 1161 (Pro-1161) is a topological domain, extracellular. The helical transmembrane segment at Val-1162–Cys-1174 threads the bilayer. At Tyr-1175 to Glu-1248 the chain is on the cytoplasmic side. Residues Val-1249–Val-1264 traverse the membrane as a helical segment. At Thr-1265–Val-1280 the chain is on the extracellular side. Residues Gly-1281–Trp-1296 form a helical membrane-spanning segment. The Cytoplasmic portion of the chain corresponds to Met-1297–Lys-1581. The region spanning Ile-1344–Arg-1578 is the ABC transporter 2 domain. 6 residues coordinate ADP: Thr-1380, Gly-1381, Gly-1383, Lys-1384, Ser-1385, and Ser-1386. Ser-1482 serves as a coordination point for ATP.

This sequence belongs to the ABC transporter superfamily. ABCC family. Conjugate transporter (TC 3.A.1.208) subfamily. Forms an heterooctamer with KCNJ11; four ABCC8/SUR1 molecules interact with one KCNJ11 homotetramer.

The protein localises to the cell membrane. Its activity is regulated as follows. KATP channels are regulated by cytoplasmic ATP/ADP ratios; ATP inhibits the channel by closing the pore, while ADP activates the channel. Activated by phosphatidylinositol 4,5-biphosphate (PtdIns(4,5)P2). Its function is as follows. Regulator subunit of pancreatic ATP-sensitive potassium channel (KATP), playing a major role in the regulation of insulin release. In pancreatic cells, it forms KATP channels with KCNJ11; KCNJ11 forms the channel pore while ABCC8 is required for activation and regulation. The protein is ATP-binding cassette sub-family C member 8 (ABCC8) of Homo sapiens (Human).